Here is a 194-residue protein sequence, read N- to C-terminus: Putative manganese efflux pump MntP (194 aa).

6 consecutive transmembrane segments (helical) span residues isoleucine 2–valine 22, leucine 43–phenylalanine 63, valine 67–valine 87, proline 111–phenylalanine 131, alanine 137–isoleucine 157, and glycine 174–phenylalanine 194.

Belongs to the MntP (TC 9.B.29) family.

The protein localises to the cell membrane. Its function is as follows. Probably functions as a manganese efflux pump. The sequence is that of Putative manganese efflux pump MntP from Bifidobacterium longum (strain DJO10A).